A 121-amino-acid chain; its full sequence is Large ribosomal subunit protein uL14c (121 aa).

Belongs to the universal ribosomal protein uL14 family. In terms of assembly, part of the 50S ribosomal subunit.

The protein resides in the plastid. It localises to the chloroplast. Functionally, binds to 23S rRNA. In Guillardia theta (Cryptophyte), this protein is Large ribosomal subunit protein uL14c.